A 188-amino-acid chain; its full sequence is Single-stranded DNA-binding protein DdrB (188 aa).

Residues Tyr140–Phe188 are disordered. Over residues Gly152 to Ala173 the composition is skewed to low complexity.

As to quaternary structure, homopentamer arranged in a ring-structure; DNA binds between subunits and along the top of the ring. The pentamers self-associate to coat ssDNA in higher-ordered structures; oligomerization facilitates the assembly of extended nucleoprotein complexes. Self-assembly does not however require ssDNA-binding. Interacts with SSB.

In terms of biological role, ssDNA-binding protein that contributes to the ionizing radiation resistance of D.radiodurans. Plays a role in DNA repair and genome reconstitution in a RecA-independent process. Required for recovery from severe genomic fragmentation as a result of exposure to severe levels of ionizing radiation. Binds ssDNA but not dsDNA. Stimulates annealing of complementary ssDNA. Does not complement an ssb disruption. This is Single-stranded DNA-binding protein DdrB (ddrB) from Deinococcus radiodurans (strain ATCC 13939 / DSM 20539 / JCM 16871 / CCUG 27074 / LMG 4051 / NBRC 15346 / NCIMB 9279 / VKM B-1422 / R1).